Reading from the N-terminus, the 443-residue chain is Minovincinine 19-hydroxy-O-acetyltransferase (443 aa).

The active-site Proton acceptor is the histidine 157. A Nuclear localization signal motif is present at residues 215 to 222 (RKRFLFSP). Residues 316–343 (TKLVIGELRKAKDKLKNLSQEKLNYVAR) are a coiled coil. Catalysis depends on aspartate 384, which acts as the Proton acceptor.

Belongs to the plant acyltransferase family. As to quaternary structure, monomer. Expressed in cortical cells of the root tip, especially in hairy roots, as well as in etiolated seedlings. Mostly expressed in roots, and, at lower levels, in leaves.

Its subcellular location is the cytoplasm. The protein resides in the nucleus. The enzyme catalyses (+)-minovincinine + acetyl-CoA = (+)-echitovenine + CoA. It functions in the pathway alkaloid biosynthesis. Its function is as follows. Component of the monoterpenoid indole alkaloids (MIAs, e.g. echitovenine, tabersonine, lochnericine, 19-hydroxytabersonine and horhammericine) biosynthetic pathway; MIAs are used in cancer treatment and other medical applications. Acyltransferase catalyzing the conversion of (+)-minovincinine to (+)-echitovenine. The polypeptide is Minovincinine 19-hydroxy-O-acetyltransferase (Catharanthus roseus (Madagascar periwinkle)).